The sequence spans 690 residues: MARSHPLERYRNFGIMAHIDAGKTTTTERILYYTGKSYKIGEVHEGAATMDWMEQEQERGITITSAATTCFWNDHRLNIIDTPGHVDFTIEVERSLRVLDGAVAAFDGVAGVEPQSETVWRQADKYGVPRMCYINKLDRTGANFYYCVQTIIDRLGAKPAVLYLPIGAESEFKGLVDLINERAIIWKDESLGAEFFYEDIPADMADKAAEYREKLIELAVEQDDAAMEAYLEGTMPDAATLKALLRKGTLAHAFVPVLCGSSFKNKGVQALLDAVVDFMPSPLDIEDVQGINPDTDEPDSRATSDDAPFSALAFKIMNDPFVGSLTFTRIYSGTLSKGSYLNSVKNKKEKVGRMLLMHANSREDIEEAYAGDIVALAGLKETTTGDTLCSEKQPIILERMEFPEPVIELSVEPKTKADQEKMGIALNRLAAEDPSFRVSTDHESGQTIIKGMGELHLEILVDRMKREFKVEANVGAPQVAYREYLAKAIDLDHTHKKQSGGTGQFGRVKVKVTPGERGSGFVFKDEIKGGNIPKEYIPAIEKGFRETAATGSLIGFPIIDFEVLLYDGAYHDVDSSALAFEICARGAMREAAQKAGIKLLEPIMKVEVITPDEYLGDVIGDINSRRGQIQGTDTRGNAQAVTAMVPLANMFGYVNQLRSFTQGRANYSMFFDHYDEVPANVATELKAKLA.

A tr-type G domain is found at 8–283 (ERYRNFGIMA…AVVDFMPSPL (276 aa)). GTP is bound by residues 17–24 (AHIDAGKT), 81–85 (DTPGH), and 135–138 (NKLD).

The protein belongs to the TRAFAC class translation factor GTPase superfamily. Classic translation factor GTPase family. EF-G/EF-2 subfamily.

Its subcellular location is the cytoplasm. In terms of biological role, catalyzes the GTP-dependent ribosomal translocation step during translation elongation. During this step, the ribosome changes from the pre-translocational (PRE) to the post-translocational (POST) state as the newly formed A-site-bound peptidyl-tRNA and P-site-bound deacylated tRNA move to the P and E sites, respectively. Catalyzes the coordinated movement of the two tRNA molecules, the mRNA and conformational changes in the ribosome. This Novosphingobium aromaticivorans (strain ATCC 700278 / DSM 12444 / CCUG 56034 / CIP 105152 / NBRC 16084 / F199) protein is Elongation factor G.